The following is a 231-amino-acid chain: MIDAEFKTALEQFGLELDEPLGMSLQQYAQSLWRYNEQINLTRHTTWDLFVTRDLRDCLQLAQLIQPGEEVLDMGSGNGVPGIPLAMLRPDIDVALAESVGKRAKVLDELVTELNLPVPVYAARGEDLLEDFRFTTIVSRAVGSLLKFCRWVEPHWSQFDRLLLIKGPKWVDERGEARHHGVLKGLELRVVATYPLGSVAPELAEAEEGDSPEAADASRGVILELTKKNKG.

S-adenosyl-L-methionine contacts are provided by residues Gly-75, 125-126, and Arg-140; that span reads GE. The span at 204 to 213 shows a compositional bias: acidic residues; that stretch reads AEAEEGDSPE. The segment at 204 to 231 is disordered; sequence AEAEEGDSPEAADASRGVILELTKKNKG.

Belongs to the methyltransferase superfamily. RNA methyltransferase RsmG family.

The protein localises to the cytoplasm. In terms of biological role, specifically methylates the N7 position of a guanine in 16S rRNA. In Rhodopirellula baltica (strain DSM 10527 / NCIMB 13988 / SH1), this protein is Ribosomal RNA small subunit methyltransferase G.